The primary structure comprises 281 residues: Ornithine lipid ester-linked acyl 2-hydroxylase (281 aa).

The span at 1–24 shows a compositional bias: polar residues; sequence MTESPLSAPAPTSNQSPAPEQTFG. Positions 1-29 are disordered; it reads MTESPLSAPAPTSNQSPAPEQTFGTAGIA.

This sequence belongs to the aspartyl/asparaginyl beta-hydroxylase family.

It carries out the reaction an N(2)-[(3R)-3-(2-saturated-acyloxy)acyl]-L-ornithine lipid + 2-oxoglutarate + O2 = a 2-hydroxyornithine lipid + succinate + CO2. The protein operates within lipid metabolism. Involved in the biosynthesis of ornithine lipids (OLs), which are phosphorus-free membrane lipids. Catalyzes the hydroxylation at the 2 position of the secondary fatty acid of OL. Contributes to symbiotic performance and acid tolerance. The protein is Ornithine lipid ester-linked acyl 2-hydroxylase of Rhizobium tropici.